The chain runs to 258 residues: GTP cyclohydrolase FolE2 (258 aa).

This sequence belongs to the GTP cyclohydrolase IV family.

The enzyme catalyses GTP + H2O = 7,8-dihydroneopterin 3'-triphosphate + formate + H(+). It participates in cofactor biosynthesis; 7,8-dihydroneopterin triphosphate biosynthesis; 7,8-dihydroneopterin triphosphate from GTP: step 1/1. Functionally, converts GTP to 7,8-dihydroneopterin triphosphate. The sequence is that of GTP cyclohydrolase FolE2 from Lawsonia intracellularis (strain PHE/MN1-00).